A 498-amino-acid chain; its full sequence is 3-octaprenyl-4-hydroxybenzoate carboxy-lyase (498 aa).

Asn-175 contacts Mn(2+). Prenylated FMN contacts are provided by residues Ile-178 to Arg-180, Arg-192 to Leu-194, and Arg-197 to Gly-198. A Mn(2+)-binding site is contributed by Glu-241. Asp-290 acts as the Proton donor in catalysis.

This sequence belongs to the UbiD family. In terms of assembly, homohexamer. The cofactor is prenylated FMN. Mn(2+) serves as cofactor.

The protein localises to the cell membrane. It catalyses the reaction a 4-hydroxy-3-(all-trans-polyprenyl)benzoate + H(+) = a 2-(all-trans-polyprenyl)phenol + CO2. Its pathway is cofactor biosynthesis; ubiquinone biosynthesis. Its function is as follows. Catalyzes the decarboxylation of 3-octaprenyl-4-hydroxy benzoate to 2-octaprenylphenol, an intermediate step in ubiquinone biosynthesis. This is 3-octaprenyl-4-hydroxybenzoate carboxy-lyase from Yersinia pseudotuberculosis serotype I (strain IP32953).